Reading from the N-terminus, the 336-residue chain is Ketol-acid reductoisomerase (NADP(+)) (336 aa).

Residues 1 to 182 (MAVIYYDKDA…GVTRAGVIET (182 aa)) form the KARI N-terminal Rossmann domain. NADP(+)-binding positions include 25-28 (YGSQ), R48, S51, S53, and 83-86 (DENQ). H108 is a catalytic residue. G134 is an NADP(+) binding site. Residues 183–328 (TFKEETETDL…KELRKMMPWL (146 aa)) form the KARI C-terminal knotted domain. Mg(2+)-binding residues include D191, E195, E227, and E231. S252 lines the substrate pocket.

This sequence belongs to the ketol-acid reductoisomerase family. Mg(2+) serves as cofactor.

It catalyses the reaction (2R)-2,3-dihydroxy-3-methylbutanoate + NADP(+) = (2S)-2-acetolactate + NADPH + H(+). The catalysed reaction is (2R,3R)-2,3-dihydroxy-3-methylpentanoate + NADP(+) = (S)-2-ethyl-2-hydroxy-3-oxobutanoate + NADPH + H(+). It participates in amino-acid biosynthesis; L-isoleucine biosynthesis; L-isoleucine from 2-oxobutanoate: step 2/4. Its pathway is amino-acid biosynthesis; L-valine biosynthesis; L-valine from pyruvate: step 2/4. Involved in the biosynthesis of branched-chain amino acids (BCAA). Catalyzes an alkyl-migration followed by a ketol-acid reduction of (S)-2-acetolactate (S2AL) to yield (R)-2,3-dihydroxy-isovalerate. In the isomerase reaction, S2AL is rearranged via a Mg-dependent methyl migration to produce 3-hydroxy-3-methyl-2-ketobutyrate (HMKB). In the reductase reaction, this 2-ketoacid undergoes a metal-dependent reduction by NADPH to yield (R)-2,3-dihydroxy-isovalerate. In Thermotoga petrophila (strain ATCC BAA-488 / DSM 13995 / JCM 10881 / RKU-1), this protein is Ketol-acid reductoisomerase (NADP(+)).